The primary structure comprises 2175 residues: Genome polyprotein (2175 aa).

Gly2 carries N-myristoyl glycine; by host lipidation. Residues 2–1485 (GAQLSRNTAG…NVNRALAVIQ (1484 aa)) lie on the Cytoplasmic side of the membrane. Amphipathic alpha-helix stretches follow at residues 557–574 (ILQNDPGKMLKDAIDKQV) and 560–581 (NDPGKMLKDAIDKQVAGALVAG). Active-site for protease 2A activity residues include His861 and Asp879. Positions 896 and 898 each coordinate Zn(2+). Catalysis depends on Cys950, which acts as the For protease 2A activity. The Zn(2+) site is built by Cys956 and His958. Residues 1090–1162 (SDNWMKKFTE…EHSSASQERQ (73 aa)) are membrane-binding. The oligomerization stretch occupies residues 1090–1228 (SDNWMKKFTE…SPGTGQSLAT (139 aa)). An RNA-binding region spans residues 1111 to 1115 (AAKIS). The SF3 helicase domain occupies 1194 to 1352 (EKRVLGAMQF…YKRDGVTLDV (159 aa)). Positions 1359, 1370, and 1375 each coordinate Zn(2+). The C4-type; degenerate zinc finger occupies 1359–1375 (CEDCSPANFKKCMPLIC). The segment at 1403 to 1410 (ESNRRYNI) is RNA-binding. Residues 1414–1419 (LEALFQ) form an oligomerization region. An intramembrane segment occupies 1486 to 1501 (SVSLIAAVAGTIYIVY). Over 1502 to 2175 (RLFSGMQGPY…ALERKWYDSF (674 aa)) the chain is Cytoplasmic. Tyr1511 carries the post-translational modification O-(5'-phospho-RNA)-tyrosine. In terms of domain architecture, Peptidase C3 spans 1532-1710 (GPLFDFGVSL…FAASLLRRYF (179 aa)). Active-site for protease 3C activity residues include His1571, Glu1602, and Cys1678. In terms of domain architecture, RdRp catalytic spans 1941–2056 (GELFGFDYTA…SYPYEIDASL (116 aa)). Residues Asp1947 and Asp2042 each coordinate Mg(2+).

Belongs to the picornaviruses polyprotein family. As to quaternary structure, interacts with capsid protein VP1 and capsid protein VP3 to form heterotrimeric protomers. In terms of assembly, interacts with capsid protein VP0, and capsid protein VP3 to form heterotrimeric protomers. Five protomers subsequently associate to form pentamers which serve as building blocks for the capsid. Interacts with capsid protein VP2, capsid protein VP3 and capsid protein VP4 following cleavage of capsid protein VP0. Interacts with capsid protein VP1 and capsid protein VP3 in the mature capsid. As to quaternary structure, interacts with capsid protein VP0 and capsid protein VP1 to form heterotrimeric protomers. Five protomers subsequently associate to form pentamers which serve as building blocks for the capsid. Interacts with capsid protein VP4 in the mature capsid. Interacts with protein 2C; this interaction may be important for virion morphogenesis. In terms of assembly, interacts with capsid protein VP1 and capsid protein VP3. Homodimer. As to quaternary structure, homohexamer; forms a hexameric ring structure with 6-fold symmetry characteristic of AAA+ ATPases. Interacts (via N-terminus) with host RTN3 (via reticulon domain); this interaction is important for viral replication. Interacts with capsid protein VP3; this interaction may be important for virion morphogenesis. In terms of assembly, interacts with protein 3CD. Homodimer. Interacts with host GBF1. Interacts (via GOLD domain) with host ACBD3 (via GOLD domain); this interaction allows the formation of a viral protein 3A/ACBD3 heterotetramer with a 2:2 stoichiometry, which will stimulate the recruitment of host PI4KB in order to synthesize PI4P at the viral RNA replication sites. As to quaternary structure, interacts with RNA-directed RNA polymerase. In terms of assembly, interacts with protein 3AB and with RNA-directed RNA polymerase. Interacts with Viral protein genome-linked and with protein 3CD. It depends on Mg(2+) as a cofactor. Post-translationally, specific enzymatic cleavages in vivo by the viral proteases yield processing intermediates and the mature proteins. In terms of processing, myristoylation is required for the formation of pentamers during virus assembly. Further assembly of 12 pentamers and a molecule of genomic RNA generates the provirion. During virion maturation, immature virions are rendered infectious following cleavage of VP0 into VP4 and VP2. This maturation seems to be an autocatalytic event triggered by the presence of RNA in the capsid and it is followed by a conformational change infectious virion. Post-translationally, myristoylation is required during RNA encapsidation and formation of the mature virus particle. In terms of processing, VPg is uridylylated by the polymerase into VPg-pUpU. This acts as a nucleotide-peptide primer for the genomic RNA replication.

Its subcellular location is the virion. It localises to the host cytoplasm. The protein localises to the host cytoplasmic vesicle membrane. It is found in the host nucleus. It carries out the reaction a ribonucleoside 5'-triphosphate + H2O = a ribonucleoside 5'-diphosphate + phosphate + H(+). It catalyses the reaction Selective cleavage of Tyr-|-Gly bond in the picornavirus polyprotein.. The catalysed reaction is RNA(n) + a ribonucleoside 5'-triphosphate = RNA(n+1) + diphosphate. The enzyme catalyses Selective cleavage of Gln-|-Gly bond in the poliovirus polyprotein. In other picornavirus reactions Glu may be substituted for Gln, and Ser or Thr for Gly.. Its activity is regulated as follows. Replication or transcription is subject to high level of random mutations by the nucleotide analog ribavirin. Its function is as follows. Forms an icosahedral capsid of pseudo T=3 symmetry with capsid proteins VP2 and VP3. The capsid is 300 Angstroms in diameter, composed of 60 copies of each capsid protein and enclosing the viral positive strand RNA genome. Capsid protein VP1 mainly forms the vertices of the capsid. Capsid protein VP1 interacts with host cell receptor to provide virion attachment to target host cells. This attachment induces virion internalization. Tyrosine kinases are probably involved in the entry process. After binding to its receptor, the capsid undergoes conformational changes. Capsid protein VP1 N-terminus (that contains an amphipathic alpha-helix) and capsid protein VP4 are externalized. Together, they shape a pore in the host membrane through which viral genome is translocated to host cell cytoplasm. Functionally, forms an icosahedral capsid of pseudo T=3 symmetry with capsid proteins VP2 and VP3. The capsid is 300 Angstroms in diameter, composed of 60 copies of each capsid protein and enclosing the viral positive strand RNA genome. In terms of biological role, lies on the inner surface of the capsid shell. After binding to the host receptor, the capsid undergoes conformational changes. Capsid protein VP4 is released, Capsid protein VP1 N-terminus is externalized, and together, they shape a pore in the host membrane through which the viral genome is translocated into the host cell cytoplasm. Component of immature procapsids, which is cleaved into capsid proteins VP4 and VP2 after maturation. Allows the capsid to remain inactive before the maturation step. Its function is as follows. Cysteine protease that cleaves viral polyprotein and specific host proteins. It is responsible for the autocatalytic cleavage between the P1 and P2 regions, which is the first cleavage occurring in the polyprotein. Also cleaves the host translation initiation factor EIF4G1, in order to shut down the capped cellular mRNA translation. Inhibits the host nucleus-cytoplasm protein and RNA trafficking by cleaving host members of the nuclear pores. Counteracts stress granule formation probably by antagonizing its assembly or promoting its dissassembly. Functionally, plays an essential role in the virus replication cycle by acting as a viroporin. Creates a pore in the host endoplasmic reticulum and as a consequence releases Ca2+ in the cytoplasm of infected cell. In turn, high levels of cytoplasmic calcium may trigger membrane trafficking and transport of viral ER-associated proteins to viroplasms, sites of viral genome replication. In terms of biological role, induces and associates with structural rearrangements of intracellular membranes. Displays RNA-binding, nucleotide binding and NTPase activities. May play a role in virion morphogenesis and viral RNA encapsidation by interacting with the capsid protein VP3. Localizes the viral replication complex to the surface of membranous vesicles. Together with protein 3CD binds the Cis-Active RNA Element (CRE) which is involved in RNA synthesis initiation. Acts as a cofactor to stimulate the activity of 3D polymerase, maybe through a nucleid acid chaperone activity. Its function is as follows. Localizes the viral replication complex to the surface of membranous vesicles. It inhibits host cell endoplasmic reticulum-to-Golgi apparatus transport and causes the disassembly of the Golgi complex, possibly through GBF1 interaction. This would result in depletion of MHC, trail receptors and IFN receptors at the host cell surface. Plays an essential role in viral RNA replication by recruiting ACBD3 and PI4KB at the viral replication sites, thereby allowing the formation of the rearranged membranous structures where viral replication takes place. Functionally, acts as a primer for viral RNA replication and remains covalently bound to viral genomic RNA. VPg is uridylylated prior to priming replication into VPg-pUpU. The oriI viral genomic sequence may act as a template for this. The VPg-pUpU is then used as primer on the genomic RNA poly(A) by the RNA-dependent RNA polymerase to replicate the viral genome. During genome replication, the VPg-RNA linkage is removed by the host TDP2, thereby accelerating replication. During the late stage of the replication cycle, host TDP2 is excluded from sites of viral RNA synthesis and encapsidation, allowing for the generation of progeny virions. In terms of biological role, involved in the viral replication complex and viral polypeptide maturation. It exhibits protease activity with a specificity and catalytic efficiency that is different from protease 3C. Protein 3CD lacks polymerase activity. Protein 3CD binds to the 5'UTR of the viral genome. Replicates the viral genomic RNA on the surface of intracellular membranes. May form linear arrays of subunits that propagate along a strong head-to-tail interaction called interface-I. Covalently attaches UMP to a tyrosine of VPg, which is used to prime RNA synthesis. The positive stranded RNA genome is first replicated at virus induced membranous vesicles, creating a dsRNA genomic replication form. This dsRNA is then used as template to synthesize positive stranded RNA genomes. ss(+)RNA genomes are either translated, replicated or encapsidated. Its function is as follows. Major viral protease that mediates proteolytic processing of the polyprotein. Cleaves host EIF5B, contributing to host translation shutoff. Also cleaves host PABPC1, contributing to host translation shutoff. Cleaves host NLRP1, triggers host N-glycine-mediated degradation of the autoinhibitory NLRP1 N-terminal fragment. The protein is Genome polyprotein of Bos taurus (Bovine).